A 279-amino-acid chain; its full sequence is Large ribosomal subunit protein uL2 (279 aa).

The segment at 223–279 (VAMNPIDHPHGGGEGRTSGGRHPVTPWGKGTKGTRTRSNKSTDKYILRSRHAKKKGR) is disordered. Residues 269-279 (LRSRHAKKKGR) are compositionally biased toward basic residues.

Belongs to the universal ribosomal protein uL2 family. As to quaternary structure, part of the 50S ribosomal subunit. Forms a bridge to the 30S subunit in the 70S ribosome.

Functionally, one of the primary rRNA binding proteins. Required for association of the 30S and 50S subunits to form the 70S ribosome, for tRNA binding and peptide bond formation. It has been suggested to have peptidyltransferase activity; this is somewhat controversial. Makes several contacts with the 16S rRNA in the 70S ribosome. The chain is Large ribosomal subunit protein uL2 from Paracoccus denitrificans (strain Pd 1222).